We begin with the raw amino-acid sequence, 644 residues long: Cell pattern formation-associated protein StuA (644 aa).

The segment covering 18 to 33 has biased composition (low complexity); that stretch reads ATAHAPASAAPSGISH. Disordered stretches follow at residues 18 to 58 and 86 to 120; these read ATAH…PGYP and QLPA…APPG. The span at 38–47 shows a compositional bias: polar residues; it reads PQSSMMQPGQ. Over residues 87-104 the composition is skewed to low complexity; it reads LPAMSSSGPSPSLSGAQS. One can recognise an HTH APSES-type domain in the interval 124–230; it reads RVTATLWEDE…HDIGALLYHP (107 aa). The H-T-H motif DNA-binding region spans 158 to 179; that stretch reads GTKLLNVAGMTRGRRDGILKSE. The tract at residues 239 to 644 is disordered; that stretch reads GSAAMAAVDR…HTMTAQRARR (406 aa). The span at 253–269 shows a compositional bias: polar residues; that stretch reads SMQTQRYISGPTTSQPP. A compositionally biased stretch (low complexity) spans 315-328; sequence SASSIMGMSNSGSS. Composition is skewed to polar residues over residues 334 to 357, 371 to 383, and 395 to 404; these read ANVQ…TRSV, QAIS…SYDN, and PGQYNTQGQS. Basic and acidic residues predominate over residues 456–465; the sequence is EGDHEHDNEY. Low complexity predominate over residues 509-524; the sequence is GSGRATPRTTTTSQTQ. The segment covering 525-544 has biased composition (polar residues); the sequence is WNSGYPTPQRQGPPSSNLYN. The interval 584–612 is nuclear localization domain; it reads KRGRDDDDEDPYRPDSVQSDDMGGLKRRK. The segment covering 635 to 644 has biased composition (polar residues); the sequence is HTMTAQRARR.

The protein belongs to the EFG1/PHD1/stuA family.

Its subcellular location is the nucleus. Transcription factor that regulates asexual reproduction. Binds the StuA-response elements (StRE) with the consensus sequence 5'-(A/T)CGCG(T/A)N(A/C)-3' at the promoters of target genes. Required for pathogenicity and positively regulates the synthesis of the mycotoxin alternariol. Acts as a positive regulator of Tox3 but is not required for the expression of ToxA. Also acts as a central regulator of carbon metabolism including glycolysis, the TCA cycle, and amino acid synthesis. The sequence is that of Cell pattern formation-associated protein StuA from Phaeosphaeria nodorum (strain SN15 / ATCC MYA-4574 / FGSC 10173) (Glume blotch fungus).